We begin with the raw amino-acid sequence, 49 residues long: MRVGITLACSECKQRNYMTTRDKKKQNEKIEKKKYCRFCNTHTLHKEIK.

Belongs to the bacterial ribosomal protein bL33 family.

The sequence is that of Large ribosomal subunit protein bL33 from Syntrophomonas wolfei subsp. wolfei (strain DSM 2245B / Goettingen).